Here is a 166-residue protein sequence, read N- to C-terminus: T-cell surface glycoprotein CD3 zeta chain (166 aa).

Positions 1–21 (MKWTALVIVAVLQTQFPVTAA) are cleaved as a signal peptide. Residues 22–30 (QSFGLLDPK) lie on the Extracellular side of the membrane. Residues 31 to 51 (LCYLLDGILFIYGVIVTALFL) form a helical membrane-spanning segment. The Cytoplasmic segment spans residues 52 to 166 (RAKFSRSADA…ALHMQALPPR (115 aa)). Serine 58 carries the phosphoserine modification. 3 consecutive ITAM domains span residues 61–89 (APAY…LDRR), 100–128 (PQRK…EIGM), and 133–161 (QRRR…LHMQ). Phosphotyrosine is present on residues tyrosine 64, tyrosine 72, tyrosine 83, tyrosine 111, tyrosine 123, tyrosine 144, and tyrosine 155. The interval 126-156 (IGMKSDNQRRRGKGHDGVYQGLSTATKDTYD) is disordered.

Belongs to the CD3Z/FCER1G family. The TCR-CD3 complex is composed of a CD3D/CD3E and a CD3G/CD3E heterodimers that preferentially associate with TCRalpha and TCRbeta, respectively, to form TCRalpha/CD3E/CD3G and TCRbeta/CD3G/CD3E trimers. In turn, the hexamer interacts with CD3Z homodimer to form the TCR-CD3 complex. Alternatively, TCRalpha and TCRbeta can be replaced by TCRgamma and TCRdelta. Interacts with SLA. Interacts with TRAT1. Interacts with DOCK2. Interacts with SLA2. Interacts with SHB. Interacts with ZAP70. Interacts (tyrosine phosphorylated) with SHC1 (via SH2 domain). Interacts with PTPRC. Interacts with CRK; this interaction regulates CD3Z phosphorylation. Interacts (on T cell side) with CD81, ICAM1 and CD9 at immunological synapses between antigen-presenting cells and T cells. Interacts with CD160. Interacts with LY6E. Interacts with LY6E. The signaling subunit of immunoglobulin gamma (IgG) Fc receptor complex. As a homodimer or a heterodimer with FCER1G, associates with the ligand binding subunit FCGR3A (via transmembrane domain); this interaction is a prerequisite for Fc receptor complex expression on the cell surface. Interacts with CD5. Phosphorylated on Tyr residues after T-cell receptor triggering by LCK in association with CD4/CD8.

It is found in the cell membrane. Part of the TCR-CD3 complex present on T-lymphocyte cell surface that plays an essential role in adaptive immune response. When antigen presenting cells (APCs) activate T-cell receptor (TCR), TCR-mediated signals are transmitted across the cell membrane by the CD3 chains CD3D, CD3E, CD3G and CD3Z. All CD3 chains contain immunoreceptor tyrosine-based activation motifs (ITAMs) in their cytoplasmic domain. Upon TCR engagement, these motifs become phosphorylated by Src family protein tyrosine kinases LCK and FYN, resulting in the activation of downstream signaling pathways. CD3Z ITAMs phosphorylation creates multiple docking sites for the protein kinase ZAP70 leading to ZAP70 phosphorylation and its conversion into a catalytically active enzyme. Plays an important role in intrathymic T-cell differentiation. Additionally, participates in the activity-dependent synapse formation of retinal ganglion cells (RGCs) in both the retina and dorsal lateral geniculate nucleus (dLGN). The sequence is that of T-cell surface glycoprotein CD3 zeta chain (CD247) from Ovis aries (Sheep).